An 833-amino-acid chain; its full sequence is Leucine--tRNA ligase (833 aa).

The 'HIGH' region motif lies at 41–52; that stretch reads PYPSGAGLHVGH. The 'KMSKS' region signature appears at 610–614; that stretch reads KMSKS. Lysine 613 serves as a coordination point for ATP.

The protein belongs to the class-I aminoacyl-tRNA synthetase family.

It localises to the cytoplasm. The enzyme catalyses tRNA(Leu) + L-leucine + ATP = L-leucyl-tRNA(Leu) + AMP + diphosphate. This chain is Leucine--tRNA ligase, found in Streptococcus equi subsp. equi (strain 4047).